We begin with the raw amino-acid sequence, 56 residues long: Alpha-conotoxin TxIA (56 aa).

Positions 1-16 are cleaved as a signal peptide; sequence MFTVFLLVVLATAVVS. A propeptide spanning residues 17–39 is cleaved from the precursor; sequence FTSDRASDDGKAAASDLITLTIK. Disulfide bonds link Cys41–Cys47 and Cys42–Cys55. A ser-Xaa-Pro motif, crucial for potent interaction with nAChR region spans residues 43–45; it reads SRP. 4-hydroxyproline; partial is present on residues Pro45 and Pro46. A Cysteine amide modification is found at Cys55.

It belongs to the conotoxin A superfamily. Exists in 4 different forms, depending on hydroxylations. Tx1a-PP does not contain hydroxyproline, tx1a-OP has one hydroxyproline at position 45, tx1a-PO has one hydroxyproline at position 46, and tx1a-PP has two hydroxyprolines at positions 45 and 46. In terms of tissue distribution, expressed by the venom duct. Tx1a that containing 1 or 2 non-hydroxylated prolines are mostly present in part 5 of the venom duct (distal part near the pharynx), whereas tx1a-OO (with 2 hydroxyprolines) is mostly present in part 4 of the venom duct (follewed by part 3).

Its subcellular location is the secreted. Alpha-conotoxins act on postsynaptic membranes, they bind to the nicotinic acetylcholine receptors (nAChR) and thus inhibit them. This toxin inhibits rat alpha-3-beta-2/CHRNA3-CHRNB2 (IC(50)=3.5 nM), rat alpha-7/CHRNA7 (IC(50)=392 nM) nAChR, and the L.stagnalis soluble acetylcholine receptor (all tested without hydroxyproline). The protein is Alpha-conotoxin TxIA of Conus textile (Cloth-of-gold cone).